Consider the following 200-residue polypeptide: 3-isopropylmalate dehydratase small subunit (200 aa).

It belongs to the LeuD family. LeuD type 1 subfamily. As to quaternary structure, heterodimer of LeuC and LeuD.

It catalyses the reaction (2R,3S)-3-isopropylmalate = (2S)-2-isopropylmalate. It participates in amino-acid biosynthesis; L-leucine biosynthesis; L-leucine from 3-methyl-2-oxobutanoate: step 2/4. Catalyzes the isomerization between 2-isopropylmalate and 3-isopropylmalate, via the formation of 2-isopropylmaleate. In Campylobacter jejuni subsp. doylei (strain ATCC BAA-1458 / RM4099 / 269.97), this protein is 3-isopropylmalate dehydratase small subunit.